The following is a 294-amino-acid chain: 4-hydroxy-tetrahydrodipicolinate synthase (294 aa).

Thr47 lines the pyruvate pocket. Tyr135 (proton donor/acceptor) is an active-site residue. Residue Lys163 is the Schiff-base intermediate with substrate of the active site. Ile206 lines the pyruvate pocket.

Belongs to the DapA family. Homodimer.

The protein resides in the cytoplasm. It catalyses the reaction L-aspartate 4-semialdehyde + pyruvate = (2S,4S)-4-hydroxy-2,3,4,5-tetrahydrodipicolinate + H2O + H(+). It participates in amino-acid biosynthesis; L-lysine biosynthesis via DAP pathway; (S)-tetrahydrodipicolinate from L-aspartate: step 3/4. In terms of biological role, catalyzes the condensation of (S)-aspartate-beta-semialdehyde [(S)-ASA] and pyruvate to 4-hydroxy-tetrahydrodipicolinate (HTPA). In Staphylococcus epidermidis (strain ATCC 35984 / DSM 28319 / BCRC 17069 / CCUG 31568 / BM 3577 / RP62A), this protein is 4-hydroxy-tetrahydrodipicolinate synthase.